The sequence spans 524 residues: Cytochrome P450 1A1 (524 aa).

Residues 33 to 44 (TRTWVPKGLKSP) form a mitochondrial targeting signal region. O-linked (GlcNAc) serine glycosylation is present at S71. F228 provides a ligand contact to substrate. C461 is a binding site for heme.

It belongs to the cytochrome P450 family. As to quaternary structure, both Cytochrome P450MT2A and Cytochrome P450MT2B interact with cytosolic chaperones HSP70 and HSP90; this interaction is required for initial targeting to mitochondria. P450MT2B interacts (via mitochondrial targeting signal) with TOMM40 (via N-terminus); this interaction is required for translocation across the mitochondrial outer membrane. The cofactor is heme. In terms of processing, two forms; MT2A (long form) and MT2B (short form); are produced by NH2-terminal proteolytic cleavage. This cleavage activates a cryptic mitochondrial targeting signal. Liver.

It localises to the cytoplasm. Its subcellular location is the endoplasmic reticulum membrane. It is found in the mitochondrion inner membrane. The protein resides in the microsome membrane. It catalyses the reaction an organic molecule + reduced [NADPH--hemoprotein reductase] + O2 = an alcohol + oxidized [NADPH--hemoprotein reductase] + H2O + H(+). The catalysed reaction is estrone + reduced [NADPH--hemoprotein reductase] + O2 = 2-hydroxyestrone + oxidized [NADPH--hemoprotein reductase] + H2O + H(+). The enzyme catalyses estrone + reduced [NADPH--hemoprotein reductase] + O2 = 4-hydroxyestrone + oxidized [NADPH--hemoprotein reductase] + H2O + H(+). It carries out the reaction estrone + reduced [NADPH--hemoprotein reductase] + O2 = 6alpha-hydroxyestrone + oxidized [NADPH--hemoprotein reductase] + H2O + H(+). It catalyses the reaction estrone + reduced [NADPH--hemoprotein reductase] + O2 = 15alpha-hydroxyestrone + oxidized [NADPH--hemoprotein reductase] + H2O + H(+). The catalysed reaction is estrone + reduced [NADPH--hemoprotein reductase] + O2 = 16alpha-hydroxyestrone + oxidized [NADPH--hemoprotein reductase] + H2O + H(+). The enzyme catalyses 17beta-estradiol + reduced [NADPH--hemoprotein reductase] + O2 = 2-hydroxy-17beta-estradiol + oxidized [NADPH--hemoprotein reductase] + H2O + H(+). It carries out the reaction 17beta-estradiol + reduced [NADPH--hemoprotein reductase] + O2 = 4-hydroxy-17beta-estradiol + oxidized [NADPH--hemoprotein reductase] + H2O + H(+). It catalyses the reaction 17beta-estradiol + reduced [NADPH--hemoprotein reductase] + O2 = 6alpha-hydroxy-17beta-estradiol + oxidized [NADPH--hemoprotein reductase] + H2O + H(+). The catalysed reaction is 17beta-estradiol + reduced [NADPH--hemoprotein reductase] + O2 = 7alpha-hydroxy-17beta-estradiol + oxidized [NADPH--hemoprotein reductase] + H2O + H(+). The enzyme catalyses 17beta-estradiol + reduced [NADPH--hemoprotein reductase] + O2 = 15alpha-hydroxy-17beta-estradiol + oxidized [NADPH--hemoprotein reductase] + H2O + H(+). It carries out the reaction (5Z,8Z,11Z)-eicosatrienoate + reduced [NADPH--hemoprotein reductase] + O2 = 19-hydroxy-(5Z,8Z,11Z)-eicosatrienoate + oxidized [NADPH--hemoprotein reductase] + H2O + H(+). It catalyses the reaction (5Z,8Z,11Z,14Z)-eicosatetraenoate + reduced [NADPH--hemoprotein reductase] + O2 = 16-hydroxy-(5Z,8Z,11Z,14Z)-eicosatetraenoate + oxidized [NADPH--hemoprotein reductase] + H2O + H(+). The catalysed reaction is (5Z,8Z,11Z,14Z)-eicosatetraenoate + reduced [NADPH--hemoprotein reductase] + O2 = 17-hydroxy-(5Z,8Z,11Z,14Z)-eicosatetraenoate + oxidized [NADPH--hemoprotein reductase] + H2O + H(+). The enzyme catalyses (5Z,8Z,11Z,14Z)-eicosatetraenoate + reduced [NADPH--hemoprotein reductase] + O2 = 18-hydroxy-(5Z,8Z,11Z,14Z)-eicosatetraenoate + oxidized [NADPH--hemoprotein reductase] + H2O + H(+). It carries out the reaction (5Z,8Z,11Z,14Z)-eicosatetraenoate + reduced [NADPH--hemoprotein reductase] + O2 = 19-hydroxy-(5Z,8Z,11Z,14Z)-eicosatetraenoate + oxidized [NADPH--hemoprotein reductase] + H2O + H(+). It catalyses the reaction (5Z,8Z,11Z,14Z,17Z)-eicosapentaenoate + reduced [NADPH--hemoprotein reductase] + O2 = 19-hydroxy-(5Z,8Z,11Z,14Z,17Z)-eicosapentaenoate + oxidized [NADPH--hemoprotein reductase] + H2O + H(+). The catalysed reaction is (5Z,8Z,11Z,14Z)-eicosatetraenoate + reduced [NADPH--hemoprotein reductase] + O2 = (8R,9S)-epoxy-(5Z,11Z,14Z)-eicosatrienoate + oxidized [NADPH--hemoprotein reductase] + H2O + H(+). The enzyme catalyses (5Z,8Z,11Z,14Z)-eicosatetraenoate + reduced [NADPH--hemoprotein reductase] + O2 = (11R,12S)-epoxy-(5Z,8Z,14Z)-eicosatrienoate + oxidized [NADPH--hemoprotein reductase] + H2O + H(+). It carries out the reaction (5Z,8Z,11Z,14Z)-eicosatetraenoate + reduced [NADPH--hemoprotein reductase] + O2 = (11S,12R)-epoxy-(5Z,8Z,14Z)-eicosatrienoate + oxidized [NADPH--hemoprotein reductase] + H2O + H(+). It catalyses the reaction (5Z,8Z,11Z,14Z)-eicosatetraenoate + reduced [NADPH--hemoprotein reductase] + O2 = (14R,15S)-epoxy-(5Z,8Z,11Z)-eicosatrienoate + oxidized [NADPH--hemoprotein reductase] + H2O + H(+). The catalysed reaction is (5Z,8Z,11Z,14Z,17Z)-eicosapentaenoate + reduced [NADPH--hemoprotein reductase] + O2 = (17R,18S)-epoxy-(5Z,8Z,11Z,14Z)-eicosatetraenoate + oxidized [NADPH--hemoprotein reductase] + H2O + H(+). The enzyme catalyses (4Z,7Z,10Z,13Z,16Z,19Z)-docosahexaenoate + reduced [NADPH--hemoprotein reductase] + O2 = (19S,20R)-epoxy-(4Z,7Z,10Z,13Z,16Z)-docosapentaenoate + oxidized [NADPH--hemoprotein reductase] + H2O + H(+). It carries out the reaction (4Z,7Z,10Z,13Z,16Z,19Z)-docosahexaenoate + reduced [NADPH--hemoprotein reductase] + O2 = (19R,20S)-epoxy-(4Z,7Z,10Z,13Z,16Z)-docosapentaenoate + oxidized [NADPH--hemoprotein reductase] + H2O + H(+). It catalyses the reaction all-trans-retinol + reduced [NADPH--hemoprotein reductase] + O2 = all-trans-retinal + oxidized [NADPH--hemoprotein reductase] + 2 H2O + H(+). The catalysed reaction is all-trans-retinal + reduced [NADPH--hemoprotein reductase] + O2 = all-trans-retinoate + oxidized [NADPH--hemoprotein reductase] + H2O + 2 H(+). The enzyme catalyses (13S)-hydroperoxy-(9Z,11E)-octadecadienoate = 13-oxo-(9Z,11E)-octadecadienoate + H2O. It carries out the reaction (12S)-hydroperoxy-(5Z,8Z,10E,14Z)-eicosatetraenoate = 12-oxo-(5Z,8Z,10E,14Z)-eicosatetraenoate + H2O. It catalyses the reaction (15S)-hydroperoxy-(5Z,8Z,11Z,13E)-eicosatetraenoate = 15-oxo-(5Z,8Z,11Z,13E)-eicosatetraenoate + H2O. The catalysed reaction is (5S)-hydroperoxy-(6E,8Z,11Z,14Z)-eicosatetraenoate = 5-oxo-(6E,8Z,11Z,14Z)-eicosatetraenoate + H2O. Its pathway is steroid hormone biosynthesis. The protein operates within lipid metabolism; fatty acid metabolism. It participates in cofactor metabolism; retinol metabolism. In terms of biological role, a cytochrome P450 monooxygenase involved in the metabolism of various endogenous substrates, including fatty acids, steroid hormones and vitamins. Mechanistically, uses molecular oxygen inserting one oxygen atom into a substrate, and reducing the second into a water molecule, with two electrons provided by NADPH via cytochrome P450 reductase (CPR; NADPH-ferrihemoprotein reductase). Catalyzes the hydroxylation of carbon-hydrogen bonds. Exhibits high catalytic activity for the formation of hydroxyestrogens from estrone (E1) and 17beta-estradiol (E2), namely 2-hydroxy E1 and E2, as well as D-ring hydroxylated E1 and E2 at the C15alpha and C16alpha positions. Displays different regioselectivities for polyunsaturated fatty acids (PUFA) hydroxylation. Catalyzes the epoxidation of double bonds of certain PUFA. Converts arachidonic acid toward epoxyeicosatrienoic acid (EET) regioisomers, 8,9-, 11,12-, and 14,15-EET, that function as lipid mediators in the vascular system. Displays an absolute stereoselectivity in the epoxidation of eicosapentaenoic acid (EPA) producing the 17(R),18(S) enantiomer. May play an important role in all-trans retinoic acid biosynthesis in extrahepatic tissues. Catalyzes two successive oxidative transformation of all-trans retinol to all-trans retinal and then to the active form all-trans retinoic acid. May also participate in eicosanoids metabolism by converting hydroperoxide species into oxo metabolites (lipoxygenase-like reaction, NADPH-independent). The sequence is that of Cytochrome P450 1A1 from Rattus norvegicus (Rat).